Consider the following 765-residue polypeptide: 1,4-alpha-glucan branching enzyme GlgB (765 aa).

The Nucleophile role is filled by D431. Residue E484 is the Proton donor of the active site.

The protein belongs to the glycosyl hydrolase 13 family. GlgB subfamily. As to quaternary structure, monomer.

It catalyses the reaction Transfers a segment of a (1-&gt;4)-alpha-D-glucan chain to a primary hydroxy group in a similar glucan chain.. The protein operates within glycan biosynthesis; glycogen biosynthesis. In terms of biological role, catalyzes the formation of the alpha-1,6-glucosidic linkages in glycogen by scission of a 1,4-alpha-linked oligosaccharide from growing alpha-1,4-glucan chains and the subsequent attachment of the oligosaccharide to the alpha-1,6 position. The polypeptide is 1,4-alpha-glucan branching enzyme GlgB (Synechococcus sp. (strain CC9605)).